Reading from the N-terminus, the 333-residue chain is CMP-N-acetylneuraminate-beta-galactosamide-alpha-2,3-sialyltransferase 4 (333 aa).

At M1–K8 the chain is on the cytoplasmic side. Residues L9 to S26 form a helical; Signal-anchor for type II membrane protein membrane-spanning segment. Over R27–F333 the chain is Lumenal. N-linked (GlcNAc...) asparagine glycosylation is found at N61, N131, N310, and N329. An intrachain disulfide couples C120 to C273.

This sequence belongs to the glycosyltransferase 29 family. In terms of processing, the soluble form derives from the membrane form by proteolytic processing. In terms of tissue distribution, highly expressed in adult placenta, heart and kidney.

The protein resides in the golgi apparatus. It is found in the golgi stack membrane. Its subcellular location is the secreted. It carries out the reaction a beta-D-galactosyl-(1-&gt;3)-N-acetyl-beta-D-galactosaminyl derivative + CMP-N-acetyl-beta-neuraminate = an N-acetyl-alpha-neuraminyl-(2-&gt;3)-beta-D-galactosyl-(1-&gt;3)-N-acetyl-beta-D-galactosaminyl derivative + CMP + H(+). It catalyses the reaction a beta-D-galactosyl-(1-&gt;3)-N-acetyl-alpha-D-galactosaminyl derivative + CMP-N-acetyl-beta-neuraminate = an N-acetyl-alpha-neuraminyl-(2-&gt;3)-beta-D-galactosyl-(1-&gt;3)-N-acetyl-alpha-D-galactosaminyl derivative + CMP + H(+). The catalysed reaction is a beta-D-galactosyl-(1-&gt;4)-N-acetyl-beta-D-glucosaminyl derivative + CMP-N-acetyl-beta-neuraminate = an N-acetyl-alpha-neuraminyl-(2-&gt;3)-beta-D-galactosyl-(1-&gt;4)-N-acetyl-beta-D-glucosaminyl derivative + CMP + H(+). The enzyme catalyses a ganglioside GM1 (d18:1(4E)) + CMP-N-acetyl-beta-neuraminate = a ganglioside GD1a (d18:1(4E)) + CMP + H(+). It carries out the reaction a ganglioside GA1 (d18:1(4E)) + CMP-N-acetyl-beta-neuraminate = a ganglioside GM1b (d18:1(4E)) + CMP + H(+). It catalyses the reaction a ganglioside GT1c (d18:1(4E)) + CMP-N-acetyl-beta-neuraminate = a ganglioside GQ1c (d18:1(4E)) + CMP + H(+). The catalysed reaction is a neolactoside nLc4Cer + CMP-N-acetyl-beta-neuraminate = a neolactoside IV(3)-alpha-NeuAc-nLc4Cer + CMP + H(+). The enzyme catalyses a neolactoside nLc4Cer(d18:1(4E)) + CMP-N-acetyl-beta-neuraminate = a neolactoside IV(3)-alpha-NeuAc-nLc4Cer(d18:1(4E)) + CMP + H(+). It functions in the pathway protein modification; protein glycosylation. Its pathway is glycolipid biosynthesis. Its function is as follows. A beta-galactoside alpha2-3 sialyltransferase involved in terminal sialylation of glycoproteins and glycolipids. Catalyzes the transfer of sialic acid (N-acetyl-neuraminic acid; Neu5Ac) from the nucleotide sugar donor CMP-Neu5Ac onto acceptor Galbeta-(1-&gt;3)-GalNAc- and Galbeta-(1-&gt;4)-GlcNAc-terminated glycoconjugates through an alpha2-3 linkage. Plays a major role in hemostasis. Responsible for sialylation of plasma VWF/von Willebrand factor, preventing its recognition by asialoglycoprotein receptors (ASGPR) and subsequent clearance. Regulates ASGPR-mediated clearance of platelets. Participates in the biosynthesis of the sialyl Lewis X epitopes, both on O- and N-glycans, which are recognized by SELE/E-selectin, SELP/P-selectin and SELL/L-selectin. Essential for selectin-mediated rolling and adhesion of leukocytes during extravasation. Contributes to adhesion and transendothelial migration of neutrophils likely through terminal sialylation of CXCR2. In glycosphingolipid biosynthesis, sialylates GM1 and GA1 gangliosides to form GD1a and GM1b, respectively. Metabolizes brain c-series ganglioside GT1c forming GQ1c. Synthesizes ganglioside LM1 (IV3Neu5Ac-nLc4Cer), a major structural component of peripheral nerve myelin. The protein is CMP-N-acetylneuraminate-beta-galactosamide-alpha-2,3-sialyltransferase 4 (ST3GAL4) of Homo sapiens (Human).